Reading from the N-terminus, the 136-residue chain is Ig heavy chain V-A2 region P-MU-3 (136 aa).

The N-terminal stretch at 1 to 19 is a signal peptide; that stretch reads METGLRWLLLVAVLKGVQC. At Gln20 the chain carries Pyrrolidone carboxylic acid. The 108-residue stretch at 20 to 127 folds into the Ig-like domain; that stretch reads QSVKESEGGL…ENEFFNAIWG (108 aa).

This chain is Ig heavy chain V-A2 region P-MU-3, found in Oryctolagus cuniculus (Rabbit).